Reading from the N-terminus, the 546-residue chain is Tryptophan biosynthesis protein TrpCD (546 aa).

An indole-3-glycerol phosphate synthase region spans residues 1 to 226 (MMDFGFVDSL…FVQTVCGGEK (226 aa)). Positions 227-546 (MIEDVLRGLD…EEIACKSTSM (320 aa)) are anthranilate phosphoribosyltransferase. Residues G295, 298–299 (GD), S303, 305–308 (NVST), 322–330 (KHGNRAVSS), and S334 contribute to the 5-phospho-alpha-D-ribose 1-diphosphate site. Anthranilate is bound at residue G295. S307 serves as a coordination point for Mg(2+). Residue N325 participates in anthranilate binding. R380 provides a ligand contact to anthranilate. D437 and E438 together coordinate Mg(2+).

The protein in the N-terminal section; belongs to the TrpC family. In the C-terminal section; belongs to the anthranilate phosphoribosyltransferase family. It depends on Mg(2+) as a cofactor.

The enzyme catalyses 1-(2-carboxyphenylamino)-1-deoxy-D-ribulose 5-phosphate + H(+) = (1S,2R)-1-C-(indol-3-yl)glycerol 3-phosphate + CO2 + H2O. The catalysed reaction is N-(5-phospho-beta-D-ribosyl)anthranilate + diphosphate = 5-phospho-alpha-D-ribose 1-diphosphate + anthranilate. The protein operates within amino-acid biosynthesis; L-tryptophan biosynthesis; L-tryptophan from chorismate: step 2/5. It participates in amino-acid biosynthesis; L-tryptophan biosynthesis; L-tryptophan from chorismate: step 4/5. Functionally, bifunctional enzyme that catalyzes the second and fourth steps of tryptophan biosynthetic pathway. The second step is catalyzed by the anthranilate phosphoribosyltransferase, coded by the TrpD domain and the fourth step is catalyzed by indole-3-glycerol phosphate synthase, coded by the TrpC domain. This is Tryptophan biosynthesis protein TrpCD (trpCD) from Archaeoglobus fulgidus (strain ATCC 49558 / DSM 4304 / JCM 9628 / NBRC 100126 / VC-16).